Here is a 402-residue protein sequence, read N- to C-terminus: Acetate kinase (402 aa).

Asn7 contributes to the Mg(2+) binding site. Lys14 is an ATP binding site. Arg95 provides a ligand contact to substrate. The active-site Proton donor/acceptor is Asp152. ATP is bound by residues His212 to Gly216, Asp286 to Arg288, and Gly334 to Asn338. Residue Glu388 coordinates Mg(2+).

It belongs to the acetokinase family. Homodimer. It depends on Mg(2+) as a cofactor. Requires Mn(2+) as cofactor.

It localises to the cytoplasm. It carries out the reaction acetate + ATP = acetyl phosphate + ADP. Its pathway is metabolic intermediate biosynthesis; acetyl-CoA biosynthesis; acetyl-CoA from acetate: step 1/2. Its function is as follows. Catalyzes the formation of acetyl phosphate from acetate and ATP. Can also catalyze the reverse reaction. The sequence is that of Acetate kinase from Nitratidesulfovibrio vulgaris (strain ATCC 29579 / DSM 644 / CCUG 34227 / NCIMB 8303 / VKM B-1760 / Hildenborough) (Desulfovibrio vulgaris).